The primary structure comprises 188 residues: Elongation factor P (188 aa).

Residue Lys-34 is modified to N6-(3,6-diaminohexanoyl)-5-hydroxylysine.

The protein belongs to the elongation factor P family. In terms of processing, may be beta-lysylated on the epsilon-amino group of Lys-34 by the combined action of EpmA and EpmB, and then hydroxylated on the C5 position of the same residue by EpmC (if this protein is present). Lysylation is critical for the stimulatory effect of EF-P on peptide-bond formation. The lysylation moiety may extend toward the peptidyltransferase center and stabilize the terminal 3-CCA end of the tRNA. Hydroxylation of the C5 position on Lys-34 may allow additional potential stabilizing hydrogen-bond interactions with the P-tRNA.

It is found in the cytoplasm. It functions in the pathway protein biosynthesis; polypeptide chain elongation. Functionally, involved in peptide bond synthesis. Alleviates ribosome stalling that occurs when 3 or more consecutive Pro residues or the sequence PPG is present in a protein, possibly by augmenting the peptidyl transferase activity of the ribosome. Modification of Lys-34 is required for alleviation. The protein is Elongation factor P of Pectobacterium carotovorum subsp. carotovorum (strain PC1).